We begin with the raw amino-acid sequence, 280 residues long: MGIRKYRPMTPGTRQRSGADFAEVTKSKPEKKLTKYVHRKQGRNNQGVITSRFRGGGHKRLYRFIDFKRDKRGIPAEVLAIEYDPNRNARIALVQYTDGEKRYILHPVGLKVGARISAGEDAPIELGCALPLEKLPLGSNVHNIELLPGRGGQMARAAGAVAQLMAKEGDYATLRLPSGEVRVVRKECYATLGQVGNLDAKNISIGKAGRQRWLGKRPHNRGVVMNAVDHPHGGGEGKSPIGGKPQTPWGKSALGTKTRKRRKPSSKFIIRRRKTASGRG.

Disordered regions lie at residues 1-25 (MGIRKYRPMTPGTRQRSGADFAEVT) and 230-280 (HPHG…SGRG). Over residues 257 to 280 (KTRKRRKPSSKFIIRRRKTASGRG) the composition is skewed to basic residues.

This sequence belongs to the universal ribosomal protein uL2 family. As to quaternary structure, part of the 50S ribosomal subunit. Forms a bridge to the 30S subunit in the 70S ribosome.

One of the primary rRNA binding proteins. Required for association of the 30S and 50S subunits to form the 70S ribosome, for tRNA binding and peptide bond formation. It has been suggested to have peptidyltransferase activity; this is somewhat controversial. Makes several contacts with the 16S rRNA in the 70S ribosome. This chain is Large ribosomal subunit protein uL2, found in Gloeobacter violaceus (strain ATCC 29082 / PCC 7421).